A 415-amino-acid chain; its full sequence is U-box domain-containing protein 29 (415 aa).

Residues 11 to 85 (TVPSFFKCPI…NIWSDSIGRR (75 aa)) form the U-box domain. ARM repeat units lie at residues 221 to 263 (KSKL…TISK) and 265 to 307 (KRVR…TLSS).

Binds to SD129 and SD25.

It catalyses the reaction S-ubiquitinyl-[E2 ubiquitin-conjugating enzyme]-L-cysteine + [acceptor protein]-L-lysine = [E2 ubiquitin-conjugating enzyme]-L-cysteine + N(6)-ubiquitinyl-[acceptor protein]-L-lysine.. It participates in protein modification; protein ubiquitination. Functions as an E3 ubiquitin ligase. The polypeptide is U-box domain-containing protein 29 (PUB29) (Arabidopsis thaliana (Mouse-ear cress)).